We begin with the raw amino-acid sequence, 122 residues long: Large ribosomal subunit protein uL14 (122 aa).

The protein belongs to the universal ribosomal protein uL14 family. In terms of assembly, part of the 50S ribosomal subunit. Forms a cluster with proteins L3 and L19. In the 70S ribosome, L14 and L19 interact and together make contacts with the 16S rRNA in bridges B5 and B8.

In terms of biological role, binds to 23S rRNA. Forms part of two intersubunit bridges in the 70S ribosome. This Allorhizobium ampelinum (strain ATCC BAA-846 / DSM 112012 / S4) (Agrobacterium vitis (strain S4)) protein is Large ribosomal subunit protein uL14.